The chain runs to 608 residues: UvrABC system protein C (608 aa).

The 79-residue stretch at 15 to 93 (HQPGVYRMYN…IKQYLPKYNV (79 aa)) folds into the GIY-YIG domain. Residues 203-238 (RQVIQTLVKQMESASQSLNFEKAAIIRDQIQAMRRV) enclose the UVR domain.

It belongs to the UvrC family. As to quaternary structure, interacts with UvrB in an incision complex.

It is found in the cytoplasm. Its function is as follows. The UvrABC repair system catalyzes the recognition and processing of DNA lesions. UvrC both incises the 5' and 3' sides of the lesion. The N-terminal half is responsible for the 3' incision and the C-terminal half is responsible for the 5' incision. The sequence is that of UvrABC system protein C from Aliivibrio fischeri (strain ATCC 700601 / ES114) (Vibrio fischeri).